A 51-amino-acid chain; its full sequence is Protein 1.4 (51 aa).

Residues 1-23 form the signal peptide; the sequence is MFKKVGKFLAALAAILTLAYILA. The helical transmembrane segment at 28-48 threads the bilayer; it reads VALVVVGACYLAAVCACVWSI.

It is found in the host membrane. The polypeptide is Protein 1.4 (Escherichia coli (Bacteriophage T7)).